A 399-amino-acid polypeptide reads, in one-letter code: Serpin-Z4 (399 aa).

A signal for targeting protein Z4 into the ER lumen region spans residues 36–56; that stretch reads GNVAFSPLSLHVALSLITAGA. Residues 343-367 are RCL; sequence GTEAGAATVAMGVAMSMPLKVDLVD.

This sequence belongs to the serpin family. Highly expressed in embryo and endosperm. Is accumulated and stored in the endosperm, where it exists in a free and a bound form. Expressed in roots, coleoptiles, shoots and leaves.

In terms of biological role, a major component of the endosperm albumin, this protein acts as a storage protein during grain filling, contributing a substantial part of the grain's lysine. May have an inhibitory function during filling or germination. Inhibits cathepsin G in vitro. The polypeptide is Serpin-Z4 (PAZ1) (Hordeum vulgare (Barley)).